The sequence spans 182 residues: Large ribosomal subunit protein uL6 (182 aa).

The protein belongs to the universal ribosomal protein uL6 family. As to quaternary structure, part of the 50S ribosomal subunit.

Its function is as follows. This protein binds to the 23S rRNA, and is important in its secondary structure. It is located near the subunit interface in the base of the L7/L12 stalk, and near the tRNA binding site of the peptidyltransferase center. In Aeropyrum pernix (strain ATCC 700893 / DSM 11879 / JCM 9820 / NBRC 100138 / K1), this protein is Large ribosomal subunit protein uL6.